The sequence spans 252 residues: Ribosomal RNA small subunit methyltransferase J (252 aa).

S-adenosyl-L-methionine is bound by residues 101-102, 117-118, 153-154, and Asp-171; these read RD, ER, and SS.

It belongs to the methyltransferase superfamily. RsmJ family.

The protein resides in the cytoplasm. It catalyses the reaction guanosine(1516) in 16S rRNA + S-adenosyl-L-methionine = N(2)-methylguanosine(1516) in 16S rRNA + S-adenosyl-L-homocysteine + H(+). Its function is as follows. Specifically methylates the guanosine in position 1516 of 16S rRNA. The sequence is that of Ribosomal RNA small subunit methyltransferase J from Salmonella heidelberg (strain SL476).